The sequence spans 133 residues: ATP synthase epsilon chain (133 aa).

Residues Ala-81–Asp-110 form a disordered region.

The protein belongs to the ATPase epsilon chain family. In terms of assembly, F-type ATPases have 2 components, CF(1) - the catalytic core - and CF(0) - the membrane proton channel. CF(1) has five subunits: alpha(3), beta(3), gamma(1), delta(1), epsilon(1). CF(0) has three main subunits: a, b and c.

The protein resides in the cell membrane. Its function is as follows. Produces ATP from ADP in the presence of a proton gradient across the membrane. This chain is ATP synthase epsilon chain, found in Shouchella clausii (strain KSM-K16) (Alkalihalobacillus clausii).